A 288-amino-acid polypeptide reads, in one-letter code: MKVDINAIKELRDLTGAGVGDCKDALTSCNGDIEKAKTYLREQGIAKAYKKSNKDVSDGLVAICIDGNKGAILEVNSETDFVARNEKFQKLVLNLAFLANQYEIENIEDFLKCEYSNNTNINDEIMSNIAVIGENIHLNKIGCLSVSSGVVCGYIHNPIVDNLGKVGAIVALESKCDVEKLKIFARQIAMHIVATKPEALSLGVLDQNIIDKERDIIKKQVEQLNKPASVLEKIIDGRMAKFYQEVVLMNQMFIMDSQFTVSELIKKKEEELGSSINIVDYKLFIINK.

Residues Thr79 to Val82 form an involved in Mg(2+) ion dislocation from EF-Tu region.

The protein belongs to the EF-Ts family.

It localises to the cytoplasm. Associates with the EF-Tu.GDP complex and induces the exchange of GDP to GTP. It remains bound to the aminoacyl-tRNA.EF-Tu.GTP complex up to the GTP hydrolysis stage on the ribosome. The polypeptide is Elongation factor Ts (Ehrlichia ruminantium (strain Gardel)).